The chain runs to 278 residues: Aquaporin NIP3-3 (278 aa).

The next 2 helical transmembrane spans lie at 70–90 (VSAEFFGTFILIFTVLSTIIM) and 99–119 (TLLGIATSAGLAVTVLVLSLI). The NPA 1 signature appears at 127 to 129 (NPA). The next 3 helical transmembrane spans lie at 141 to 163 (PSAHLLPYISSQILGAVAASFAV), 185 to 205 (AFFVEFIITFFLLFIITALAT), and 213 to 233 (LIAVAVGATVMMNILVAGPST). Positions 238–240 (NPA) match the NPA 2 motif. Residues 255–275 (IWVYLVATPLGAIAGTGAYVA) traverse the membrane as a helical segment.

Belongs to the MIP/aquaporin (TC 1.A.8) family. NIP (TC 1.A.8.12) subfamily. As to expression, expressed in leaves and at lower levels in roots and anthers.

The protein localises to the membrane. Its function is as follows. Aquaporins facilitate the transport of water and small neutral solutes across cell membranes. In Oryza sativa subsp. japonica (Rice), this protein is Aquaporin NIP3-3 (NIP3-3).